Consider the following 272-residue polypeptide: Shikimate dehydrogenase (NADP(+)) (272 aa).

Residues 14–16 and Thr-61 each bind shikimate; that span reads SKS. Lys-65 serves as the catalytic Proton acceptor. Glu-77 provides a ligand contact to NADP(+). 2 residues coordinate shikimate: Asn-86 and Asp-102. NADP(+) is bound by residues 126–130, 149–154, and Met-213; these read GAGGA and NRTASR. Tyr-215 serves as a coordination point for shikimate. An NADP(+)-binding site is contributed by Gly-237.

This sequence belongs to the shikimate dehydrogenase family. In terms of assembly, homodimer.

The enzyme catalyses shikimate + NADP(+) = 3-dehydroshikimate + NADPH + H(+). Its pathway is metabolic intermediate biosynthesis; chorismate biosynthesis; chorismate from D-erythrose 4-phosphate and phosphoenolpyruvate: step 4/7. Its function is as follows. Involved in the biosynthesis of the chorismate, which leads to the biosynthesis of aromatic amino acids. Catalyzes the reversible NADPH linked reduction of 3-dehydroshikimate (DHSA) to yield shikimate (SA). The sequence is that of Shikimate dehydrogenase (NADP(+)) from Salmonella enteritidis PT4 (strain P125109).